We begin with the raw amino-acid sequence, 218 residues long: Thiopurine S-methyltransferase (218 aa).

4 residues coordinate S-adenosyl-L-methionine: W10, L45, E66, and R123.

This sequence belongs to the class I-like SAM-binding methyltransferase superfamily. TPMT family.

It localises to the cytoplasm. It catalyses the reaction S-adenosyl-L-methionine + a thiopurine = S-adenosyl-L-homocysteine + a thiopurine S-methylether.. In Xanthomonas campestris pv. campestris (strain 8004), this protein is Thiopurine S-methyltransferase.